A 186-amino-acid polypeptide reads, in one-letter code: Orotate phosphoribosyltransferase (186 aa).

5-phospho-alpha-D-ribose 1-diphosphate is bound by residues Arg93, Lys94, Lys97, His99, and Glu119–Ser127. 2 residues coordinate orotate: Thr123 and Arg151.

Belongs to the purine/pyrimidine phosphoribosyltransferase family. PyrE subfamily. Homodimer. It depends on Mg(2+) as a cofactor.

It carries out the reaction orotidine 5'-phosphate + diphosphate = orotate + 5-phospho-alpha-D-ribose 1-diphosphate. It participates in pyrimidine metabolism; UMP biosynthesis via de novo pathway; UMP from orotate: step 1/2. Its function is as follows. Catalyzes the transfer of a ribosyl phosphate group from 5-phosphoribose 1-diphosphate to orotate, leading to the formation of orotidine monophosphate (OMP). This is Orotate phosphoribosyltransferase from Pyrococcus horikoshii (strain ATCC 700860 / DSM 12428 / JCM 9974 / NBRC 100139 / OT-3).